The primary structure comprises 285 residues: Golgi to ER traffic protein 2 (285 aa).

The span at 1 to 10 shows a compositional bias: basic and acidic residues; that stretch reads MSELTEAEKR. Positions 1–71 are disordered; that stretch reads MSELTEAEKR…HSATPDIKED (71 aa). At serine 2 the chain carries N-acetylserine. At 2–148 the chain is on the cytoplasmic side; it reads SELTEAEKRR…LDYHDYLLNR (147 aa). The segment covering 11–20 has biased composition (basic residues); the sequence is RLLRERRQKK. A compositionally biased stretch (polar residues) spans 24–42; sequence GGASSRLNKITGQASSHLN. Serine 45 is modified (phosphoserine). Low complexity predominate over residues 49–60; sequence APSAAKATPPAS. Residues 149 to 169 form a helical membrane-spanning segment; it reads LKAWTILVKWVFFLLPYLYLI. Over 170-196 the chain is Lumenal; the sequence is TRPNSSVWPAYAFTQSAWFAPLRNPSN. Residues asparagine 173 and asparagine 196 are each glycosylated (N-linked (GlcNAc...) asparagine). Residues 197–216 form a helical membrane-spanning segment; that stretch reads FTRIFATFEFLSISIYYQLL. Over 217-263 the chain is Cytoplasmic; that stretch reads KNVEHKSKIKNLQDTNKLVKLVSLVPEGVIPVANLKGKLITLLQYWD. A helical transmembrane segment spans residues 264 to 284; that stretch reads LLSMLITDISFVLIVLGLLTY. A topological domain (lumenal) is located at residue leucine 285.

It belongs to the GET2 family. As to quaternary structure, component of the Golgi to ER traffic (GET) complex, which is composed of GET1, GET2 and GET3. Within the complex, GET1 and GET2 form a heterotetramer which is stabilized by phosphatidylinositol binding and which binds to the GET3 homodimer.

The protein resides in the endoplasmic reticulum membrane. It is found in the golgi apparatus membrane. Required for the post-translational delivery of tail-anchored (TA) proteins to the endoplasmic reticulum. Together with GET1, acts as a membrane receptor for soluble GET3, which recognizes and selectively binds the transmembrane domain of TA proteins in the cytosol. The GET complex cooperates with the HDEL receptor ERD2 to mediate the ATP-dependent retrieval of resident ER proteins that contain a C-terminal H-D-E-L retention signal from the Golgi to the ER. Involved in DNA replication and DNA damage response and also in cell wall function. This is Golgi to ER traffic protein 2 from Saccharomyces cerevisiae (strain YJM789) (Baker's yeast).